The sequence spans 208 residues: Small ribosomal subunit protein uS4 (208 aa).

The 61-residue stretch at 98–158 (RRLDNVVYRL…EKSRKIACIN (61 aa)) folds into the S4 RNA-binding domain.

It belongs to the universal ribosomal protein uS4 family. As to quaternary structure, part of the 30S ribosomal subunit. Contacts protein S5. The interaction surface between S4 and S5 is involved in control of translational fidelity.

Its function is as follows. One of the primary rRNA binding proteins, it binds directly to 16S rRNA where it nucleates assembly of the body of the 30S subunit. With S5 and S12 plays an important role in translational accuracy. In Geobacter metallireducens (strain ATCC 53774 / DSM 7210 / GS-15), this protein is Small ribosomal subunit protein uS4.